The primary structure comprises 265 residues: Hydroxyethylthiazole kinase (265 aa).

M50 lines the substrate pocket. The ATP site is built by R125 and T171. G198 contacts substrate.

This sequence belongs to the Thz kinase family. The cofactor is Mg(2+).

It carries out the reaction 5-(2-hydroxyethyl)-4-methylthiazole + ATP = 4-methyl-5-(2-phosphooxyethyl)-thiazole + ADP + H(+). The protein operates within cofactor biosynthesis; thiamine diphosphate biosynthesis; 4-methyl-5-(2-phosphoethyl)-thiazole from 5-(2-hydroxyethyl)-4-methylthiazole: step 1/1. In terms of biological role, catalyzes the phosphorylation of the hydroxyl group of 4-methyl-5-beta-hydroxyethylthiazole (THZ). The polypeptide is Hydroxyethylthiazole kinase (Salmonella choleraesuis (strain SC-B67)).